The sequence spans 373 residues: PqqA peptide cyclase (373 aa).

The region spanning 9–224 (LTKPRWLLAE…QSYKEKVKGR (216 aa)) is the Radical SAM core domain. [4Fe-4S] cluster is bound by residues Cys-23, Cys-27, and Cys-30.

This sequence belongs to the radical SAM superfamily. PqqE family. As to quaternary structure, interacts with PqqD. The interaction is necessary for activity of PqqE. Requires [4Fe-4S] cluster as cofactor.

It catalyses the reaction [PQQ precursor protein] + S-adenosyl-L-methionine = E-Y cross-linked-[PQQ precursor protein] + 5'-deoxyadenosine + L-methionine + H(+). It participates in cofactor biosynthesis; pyrroloquinoline quinone biosynthesis. In terms of biological role, catalyzes the cross-linking of a glutamate residue and a tyrosine residue in the PqqA protein as part of the biosynthesis of pyrroloquinoline quinone (PQQ). The chain is PqqA peptide cyclase from Methylococcus capsulatus (strain ATCC 33009 / NCIMB 11132 / Bath).